The following is a 975-amino-acid chain: MKLEHPDRLMKRTPLSLAALETHDAFAERHIGPDAASQQAMLDTLGFATRAALIDAVIPASIRRAETLPLGPFAQPLSEAEALAALRELADKNQVFRSYIGQGYYDTHTPAVILRNVLENPAWYTAYTPYQPEISQGRLEALLNFQQMVADLTGLEISNASLLDEATAAAEAMTLLQRVGKPQSNVFYVADDVLPQTLEVIKTRAKPIGIEVKSGPAADAAAANAFGVLLQYPGVNGDVRDYRALADAIHAAGGHVVVAADILALTVLTPPGEWGADVAVGNTQRFGVPMGFGGPHAAYMAVRDEFKRQMPGRLVGVTVDAQGKPALRLALQTREQHIRREKATSNVCTAQALLAIMASMYAVYHGPRGLKTIALRVNRIAALVAAGVKQLGFATVNDTFFDTLTIDTGARTAQIHALANAKRINLRRVSDTRVGISVDETTTRGDLAELLGVFAQAAGGTAPDVDALDAGLADTAALPAGLQRTSAYLTHHVFNRHHSETEMLRYLRSLSDKDLALDRSMIPLGSCTMKLNATSEMLPVTWPEFGRIHPFAPAEQTVGYREMIDQLEQMLVAATGYAAVSLQPNAGSQGEYAGLLIIHAYHESRGESHRNVCLIPASAHGTNPASAHMAGMKVVVVACDAQGNVDIDDLKAKAEQHANDLAAIMITYPSTHGVFEQNVREICEIVHAHGGQVYVDGANMNAMVGLTAPGQFGGDVSHLNLHKTFCIPHGGGGPGVGPVAVGAHLAKFLPNQRSTGYARAEDGIGAVSAAPYGSASILPISWMYIAMMGAKNLTAATETAILNANYIAKRLAPHYPVLYSGPGGLVAHECILDLRPIKDSSGITVDDVAKRLMDYGFHAPTMSFPVPGTLMVEPTESESQEELDRFVAAMIAIRDEIRAVEEGRADREDNPLRHAPHTAAVVTANEWPHAYSREQAAYPVASLVANKYWPPVGRADNAYGDRNLFCSCVPVSDYA.

At K723 the chain carries N6-(pyridoxal phosphate)lysine.

It belongs to the GcvP family. The glycine cleavage system is composed of four proteins: P, T, L and H. The cofactor is pyridoxal 5'-phosphate.

It carries out the reaction N(6)-[(R)-lipoyl]-L-lysyl-[glycine-cleavage complex H protein] + glycine + H(+) = N(6)-[(R)-S(8)-aminomethyldihydrolipoyl]-L-lysyl-[glycine-cleavage complex H protein] + CO2. In terms of biological role, the glycine cleavage system catalyzes the degradation of glycine. The P protein binds the alpha-amino group of glycine through its pyridoxal phosphate cofactor; CO(2) is released and the remaining methylamine moiety is then transferred to the lipoamide cofactor of the H protein. The sequence is that of Glycine dehydrogenase (decarboxylating) from Burkholderia thailandensis (strain ATCC 700388 / DSM 13276 / CCUG 48851 / CIP 106301 / E264).